The primary structure comprises 443 residues: MANVVVIGAQWGDEGKGKITDLLSKSADVVVRSQGGVNAGHTVVVQGQTFKLHLIPSGILYPDTECIIGSGTVIDPKVLLEEIDQLHRLNVSTENLFISQTAHVTMPYHRLIDGASEEMRGDRKIGTTGRGIGPTYADKSERTGVRVLDLMDLDNSQDKFVWAIKYKNVILEKLYDLPPLDPQEVIEEYRAYADALRPHVVDSSLKVFEGVNAKKNILFEGAQGTLLDIDHGTYPYVTSSNPIAGGACVGAGIGPTIIDRVIGVAKAYTTRVGEGPFPTELDDEIGELLGHVGAEFGTTTGRRRRCGWFDAVIGRYAARINGLDCLAITKLDVLDSLDEIKVCVAYEIDGEACEHFPSNANLFARCQPIYKTMPGWKQPTSDCRSLDELPKEALAYLKFLAELMDVPIAIVSLGAGREQTIIVEDPIHGPKRALLDRNGEPIG.

GTP is bound by residues 12 to 18 and 40 to 42; these read GDEGKGK and GHT. Residue D13 is the Proton acceptor of the active site. Positions 13 and 40 each coordinate Mg(2+). Residues 13 to 16, 38 to 41, T128, R142, Q223, T238, and R302 each bind IMP; these read DEGK and NAGH. The active-site Proton donor is the H41. 298–304 serves as a coordination point for substrate; it reads TTTGRRR. GTP is bound by residues R304, 330-332, and 412-414; these read KLD and SLG.

This sequence belongs to the adenylosuccinate synthetase family. As to quaternary structure, homodimer. The cofactor is Mg(2+).

Its subcellular location is the cytoplasm. It carries out the reaction IMP + L-aspartate + GTP = N(6)-(1,2-dicarboxyethyl)-AMP + GDP + phosphate + 2 H(+). It functions in the pathway purine metabolism; AMP biosynthesis via de novo pathway; AMP from IMP: step 1/2. Functionally, plays an important role in the de novo pathway of purine nucleotide biosynthesis. Catalyzes the first committed step in the biosynthesis of AMP from IMP. The protein is Adenylosuccinate synthetase of Picosynechococcus sp. (strain ATCC 27264 / PCC 7002 / PR-6) (Agmenellum quadruplicatum).